The following is a 317-amino-acid chain: MSAPETTAPLQPPAAPAASLPGSLAESLASSGITELLAQLDRELIGLKPVKARIRDIAALLLVDKLRAARGFSAGAPSLHMCFTGNPGTGKTTVAMRMAQILHQLGYVRRGHLVAVTRDDLVGQYIGHTAPKTKEILKKAMGGVLFIDEAYYLYRPENERDYGQEAIEILLQVMENNRDDLVVILAGYKDRMDRFFESNPGMSSRVAHHVDFPDYQLDELRQIADLMLSEMQYRFDDESRAVFADYLARRMTQPHFANARSVRNALDRARLRHASRLLDDAGTVVDDHTLTTITASDLLASRVFSKAAPDARTPAKE.

The interval 1-21 (MSAPETTAPLQPPAAPAASLP) is disordered. ATP is bound at residue 85–92 (GNPGTGKT).

It belongs to the CbxX/CfxQ family.

Its function is as follows. Seems to be necessary for the expression of RuBisCO. The sequence is that of Protein CbxX, chromosomal (cbxXC) from Cupriavidus necator (strain ATCC 17699 / DSM 428 / KCTC 22496 / NCIMB 10442 / H16 / Stanier 337) (Ralstonia eutropha).